The chain runs to 64 residues: Prokaryotic ubiquitin-like protein Pup (64 aa).

Residues 1–11 show a composition bias toward basic and acidic residues; the sequence is MAQEQTKRGGG. The disordered stretch occupies residues 1-37; it reads MAQEQTKRGGGGDDEDDFASSTAAGQERREKLAEDTD. The segment at 21–58 is ARC ATPase binding; that stretch reads STAAGQERREKLAEDTDDLLDEIDDVLEENAEDFVRAY. The stretch at 24–52 forms a coiled coil; the sequence is AGQERREKLAEDTDDLLDEIDDVLEENAE. The residue at position 64 (glutamine 64) is a Deamidated glutamine. Glutamine 64 participates in a covalent cross-link: Isoglutamyl lysine isopeptide (Gln-Lys) (interchain with K-? in acceptor proteins).

It belongs to the prokaryotic ubiquitin-like protein family. Strongly interacts with the proteasome-associated ATPase ARC through a hydrophobic interface; the interacting region of Pup lies in its C-terminal half. There is one Pup binding site per ARC hexamer ring. Post-translationally, is modified by deamidation of its C-terminal glutamine to glutamate by the deamidase Dop, a prerequisite to the subsequent pupylation process.

The protein operates within protein degradation; proteasomal Pup-dependent pathway. Protein modifier that is covalently attached to lysine residues of substrate proteins, thereby targeting them for proteasomal degradation. The tagging system is termed pupylation. This is Prokaryotic ubiquitin-like protein Pup from Mycolicibacterium paratuberculosis (strain ATCC BAA-968 / K-10) (Mycobacterium paratuberculosis).